Here is a 778-residue protein sequence, read N- to C-terminus: 5-methyltetrahydropteroyltriglutamate--homocysteine methyltransferase (778 aa).

Residues 17 to 20 (RELK) and K118 each bind 5-methyltetrahydropteroyltri-L-glutamate. L-homocysteine contacts are provided by residues 436–438 (IGS) and E489. L-methionine-binding positions include 436 to 438 (IGS) and E489. 5-methyltetrahydropteroyltri-L-glutamate-binding positions include 520 to 521 (RC) and W566. D604 contributes to the L-homocysteine binding site. Position 604 (D604) interacts with L-methionine. E610 is a binding site for 5-methyltetrahydropteroyltri-L-glutamate. Residues H646, C648, and E670 each coordinate Zn(2+). H699 functions as the Proton donor in the catalytic mechanism. Residue C731 coordinates Zn(2+).

Belongs to the vitamin-B12 independent methionine synthase family. Zn(2+) serves as cofactor.

The enzyme catalyses 5-methyltetrahydropteroyltri-L-glutamate + L-homocysteine = tetrahydropteroyltri-L-glutamate + L-methionine. It participates in amino-acid biosynthesis; L-methionine biosynthesis via de novo pathway; L-methionine from L-homocysteine (MetE route): step 1/1. In terms of biological role, catalyzes the transfer of a methyl group from 5-methyltetrahydrofolate to homocysteine resulting in methionine formation. The protein is 5-methyltetrahydropteroyltriglutamate--homocysteine methyltransferase of Vibrio vulnificus (strain CMCP6).